We begin with the raw amino-acid sequence, 310 residues long: HTH-type transcriptional activator TtdR (310 aa).

An HTH lysR-type domain is found at 6-63; sequence PLAKDLQVLVEIVHSGSFSAAAATLGQTPAFVTKRIQILENTLATTLLNRSARGVALT. Positions 23–42 form a DNA-binding region, H-T-H motif; the sequence is FSAAAATLGQTPAFVTKRIQ.

Belongs to the LysR transcriptional regulatory family.

Positive regulator required for L-tartrate-dependent anaerobic growth on glycerol. Induces expression of the ttdA-ttdB-ygjE operon. The chain is HTH-type transcriptional activator TtdR (ttdR) from Escherichia coli O6:K15:H31 (strain 536 / UPEC).